A 533-amino-acid polypeptide reads, in one-letter code: Probable bifunctional tRNA threonylcarbamoyladenosine biosynthesis protein (533 aa).

The segment at 1-328 is kae1; it reads MRILGIEGTA…FRPDAVTVTW (328 aa). Fe cation contacts are provided by His112 and His116. L-threonylcarbamoyladenylate is bound by residues 133–137, Asp165, Gly178, Glu182, and Asn261; that span reads NASGA. Residue Asp289 coordinates Fe cation. Residues 339–533 enclose the Protein kinase domain; that stretch reads PATLDKTPVR…RDIESRGRYH (195 aa). Residues 347-354 and Lys363 each bind ATP; that span reads VRGAEAIV. The active-site Proton acceptor; for kinase activity is the Asp452.

The protein in the N-terminal section; belongs to the KAE1 / TsaD family. In the C-terminal section; belongs to the protein kinase superfamily. Tyr protein kinase family. BUD32 subfamily. In terms of assembly, component of the KEOPS complex that consists of Kae1, Bud32, Cgi121 and Pcc1; the whole complex dimerizes. Requires Fe(2+) as cofactor.

The protein localises to the cytoplasm. The enzyme catalyses L-seryl-[protein] + ATP = O-phospho-L-seryl-[protein] + ADP + H(+). The catalysed reaction is L-threonyl-[protein] + ATP = O-phospho-L-threonyl-[protein] + ADP + H(+). It carries out the reaction L-threonylcarbamoyladenylate + adenosine(37) in tRNA = N(6)-L-threonylcarbamoyladenosine(37) in tRNA + AMP + H(+). In terms of biological role, required for the formation of a threonylcarbamoyl group on adenosine at position 37 (t(6)A37) in tRNAs that read codons beginning with adenine. Is a component of the KEOPS complex that is probably involved in the transfer of the threonylcarbamoyl moiety of threonylcarbamoyl-AMP (TC-AMP) to the N6 group of A37. The Kae1 domain likely plays a direct catalytic role in this reaction. The Bud32 domain probably displays kinase activity that regulates Kae1 function. The polypeptide is Probable bifunctional tRNA threonylcarbamoyladenosine biosynthesis protein (Haloquadratum walsbyi (strain DSM 16790 / HBSQ001)).